The chain runs to 211 residues: Histidine biosynthesis bifunctional protein HisIE (211 aa).

The interval 1-118 is phosphoribosyl-AMP cyclohydrolase; that stretch reads MNVDDLTFDD…IYGASDRFGI (118 aa). The phosphoribosyl-ATP pyrophosphohydrolase stretch occupies residues 119 to 211; sequence IATLEALIAE…LEERHRPKEE (93 aa).

It in the N-terminal section; belongs to the PRA-CH family. In the C-terminal section; belongs to the PRA-PH family.

Its subcellular location is the cytoplasm. The enzyme catalyses 1-(5-phospho-beta-D-ribosyl)-ATP + H2O = 1-(5-phospho-beta-D-ribosyl)-5'-AMP + diphosphate + H(+). It catalyses the reaction 1-(5-phospho-beta-D-ribosyl)-5'-AMP + H2O = 1-(5-phospho-beta-D-ribosyl)-5-[(5-phospho-beta-D-ribosylamino)methylideneamino]imidazole-4-carboxamide. Its pathway is amino-acid biosynthesis; L-histidine biosynthesis; L-histidine from 5-phospho-alpha-D-ribose 1-diphosphate: step 2/9. It functions in the pathway amino-acid biosynthesis; L-histidine biosynthesis; L-histidine from 5-phospho-alpha-D-ribose 1-diphosphate: step 3/9. This chain is Histidine biosynthesis bifunctional protein HisIE (hisI), found in Halalkalibacterium halodurans (strain ATCC BAA-125 / DSM 18197 / FERM 7344 / JCM 9153 / C-125) (Bacillus halodurans).